Reading from the N-terminus, the 518-residue chain is MSNQNDGWGETATETSAPAPPPASAPVSSSNNDGWGEPAPSAPADNGWADAGASNGGSGANNNDGWFDAPVPPSSQPPKKEASDIQLQDDTEGLITNTFQVEVKLADLQGDPNSPLYSVQSFKELNLHEDLMKGIIAAGFQKPSKIQEKALPLLLSNPPRNLIGQSQSGTGKTAAFTLNMLSRVDPTIPTPQAICIAPSRELARQIQEVIDQIGQFTQVGTFLAIPGSWSRNSRIDKQILIGTPGTLVDMLMRGSRILDPRMIRVLVLDEADELIAQQGLGEQTFRIKQLLPPNVQNVLFSATFNDDVQEFADRFAPEANKIFLRKEDITVDAIRQLYLECDSEDQKYEALSALYDCLVIGQSIVFCKRKVTADHIAERLISEGHAVASLHGDKLSQERDAILDGFRNGETKVLITTNVIARGIDIPAVNMVVNYDVPDLGPGGNGPDIETYIHRIGRTGRFGRKGCSVIFTHDYRSKSDVERIMNTLGKPMKKIDARSTTDIEQLEKALKLAMKGPA.

The segment at 1-85 (MSNQNDGWGE…QPPKKEASDI (85 aa)) is disordered. Low complexity predominate over residues 44–53 (ADNGWADAGA). The short motif at 120–148 (QSFKELNLHEDLMKGIIAAGFQKPSKIQE) is the Q motif element. The Helicase ATP-binding domain occupies 153 to 322 (LLLSNPPRNL…DRFAPEANKI (170 aa)). 166–173 (SQSGTGKT) lines the ATP pocket. Residues 269-272 (DEAD) carry the DEAD box motif. The 171-residue stretch at 333 to 503 (AIRQLYLECD…KIDARSTTDI (171 aa)) folds into the Helicase C-terminal domain.

It belongs to the DEAD box helicase family. DDX19/DBP5 subfamily. In terms of assembly, associates with the nuclear pore complex.

It is found in the cytoplasm. Its subcellular location is the nucleus. It localises to the nuclear pore complex. The protein resides in the nucleus membrane. It catalyses the reaction ATP + H2O = ADP + phosphate + H(+). Its function is as follows. ATP-dependent RNA helicase associated with the nuclear pore complex and essential for mRNA export from the nucleus. May participate in a terminal step of mRNA export through the removal of proteins that accompany mRNA through the nucleopore complex. May also be involved in early transcription. This is ATP-dependent RNA helicase DBP5 (DBP5) from Cryptococcus neoformans var. neoformans serotype D (strain JEC21 / ATCC MYA-565) (Filobasidiella neoformans).